A 234-amino-acid polypeptide reads, in one-letter code: Preflagellin peptidase (234 aa).

Position 1 (Met-1) is a topological domain, cytoplasmic. A helical transmembrane segment spans residues 2–18 (INFIVGAIGLLIASIYD). At 19-23 (LKSRE) the chain is on the extracellular side. The helical transmembrane segment at 24-46 (IEDYVWVSMVIFGLIYNGYLSFI) threads the bilayer. Residues 47 to 49 (SHD) lie on the Cytoplasmic side of the membrane. A helical membrane pass occupies residues 50–72 (MLYVIQSIVGFIVCFFLGFFMFL). Residues 73-78 (LGVGGG) lie on the Extracellular side of the membrane. A helical membrane pass occupies residues 79-89 (DGKLIMGLGAL). The Cytoplasmic portion of the chain corresponds to 90–110 (IPKYNMPIHTPLGAILNYLYL). The chain crosses the membrane as a helical span at residues 111–139 (PSFPIMVVINAMFFSITLPIIIFLRNVIR). Residues 140–205 (GVKPKTKKEV…EEIWVTPAIP (66 aa)) are Extracellular-facing. Residues 206-217 (FVVPIFLSYLLT) traverse the membrane as a helical segment. The Cytoplasmic portion of the chain corresponds to 218 to 234 (SIIGDKIIGIFLSVFGL).

Belongs to the peptidase A24 family. Archaeal preflagellin peptidase subfamily.

It localises to the cell membrane. The enzyme catalyses Cleaves the signal peptide of 3 to 12 amino acids from the N-terminal of preflagellin, usually at Arg-Gly-|- or Lys-Gly-|-, to release flagellin.. Its function is as follows. Cleaves the N-terminal leader peptide from preflagellins. The protein is Preflagellin peptidase (flaK) of Methanocaldococcus jannaschii (strain ATCC 43067 / DSM 2661 / JAL-1 / JCM 10045 / NBRC 100440) (Methanococcus jannaschii).